Reading from the N-terminus, the 523-residue chain is Arabinose import ATP-binding protein AraG (523 aa).

ABC transporter domains lie at 20–255 (LAFR…MVGR) and 268–511 (IGSE…MLRT). An ATP-binding site is contributed by 52-59 (GENGAGKS).

It belongs to the ABC transporter superfamily. Arabinose importer (TC 3.A.1.2.2) family. In terms of assembly, the complex is composed of two ATP-binding proteins (AraG), two transmembrane proteins (AraH) and a solute-binding protein (AraF).

It localises to the cell inner membrane. It carries out the reaction L-arabinose(out) + ATP + H2O = L-arabinose(in) + ADP + phosphate + H(+). Its function is as follows. Part of the ABC transporter complex AraFGH involved in arabinose import. Responsible for energy coupling to the transport system. In Yersinia pestis bv. Antiqua (strain Antiqua), this protein is Arabinose import ATP-binding protein AraG.